A 326-amino-acid chain; its full sequence is ELMO domain-containing protein 1 (326 aa).

One can recognise an ELMO domain in the interval 133-306 (QHEEMLLKLW…KFRKRIIKQL (174 aa)).

Acts as a GTPase-activating protein (GAP) toward guanine nucleotide exchange factors like ARL2, ARL3, ARF1 and ARF6, but not for GTPases outside the Arf family. The protein is ELMO domain-containing protein 1 (ELMOD1) of Bos taurus (Bovine).